The primary structure comprises 612 residues: Coagulation factor XII (612 aa).

The N-terminal stretch at 1-19 (MRALLLLGALLVSLESTVS) is a signal peptide. The 49-residue stretch at 42–90 (VTGEPCHFPFQYHRQLHHKCIHRGRPGPRPWCATTPNFEKDQRWAYCLE) folds into the Fibronectin type-II domain. 20 cysteine pairs are disulfide-bonded: cysteine 47-cysteine 73, cysteine 61-cysteine 88, cysteine 98-cysteine 110, cysteine 104-cysteine 119, cysteine 121-cysteine 130, cysteine 135-cysteine 163, cysteine 161-cysteine 170, cysteine 178-cysteine 189, cysteine 183-cysteine 198, cysteine 200-cysteine 209, cysteine 217-cysteine 306, cysteine 240-cysteine 288, cysteine 268-cysteine 301, cysteine 355-cysteine 482, cysteine 393-cysteine 409, cysteine 401-cysteine 471, cysteine 432-cysteine 435, cysteine 498-cysteine 566, cysteine 529-cysteine 545, and cysteine 556-cysteine 587. The EGF-like 1 domain maps to 94–131 (VKDHCSKHNPCQKGGTCVNMPDGPRCICADHFTGKHCQ). The O-linked (Fuc) threonine glycan is linked to threonine 109. Residues 133-173 (EKCFEPQFFRFFHENEIWHRLEPAGVVKCQCKGPNAQCKPL) form the Fibronectin type-I domain. The 37-residue stretch at 174-210 (ASQVCRTNPCLNGGSCLQAEGHRLCRCAPSFAGRLCD) folds into the EGF-like 2 domain. The 90-residue stretch at 217-306 (CYDDRDRGLS…SWNYCRLAPC (90 aa)) folds into the Kringle domain. N-linked (GlcNAc...) asparagine glycosylation is found at asparagine 251 and asparagine 282. A Peptidase S1 domain is found at 369 to 611 (VVGGLVALPG…YLAWIREHTA (243 aa)). The active-site Charge relay system is histidine 408. Asparagine 429 is a glycosylation site (N-linked (GlcNAc...) asparagine). Aspartate 457 acts as the Charge relay system in catalysis. Serine 560 functions as the Charge relay system in the catalytic mechanism.

Belongs to the peptidase S1 family. Interacts with HRG; the interaction, which is enhanced in the presence of zinc ions and inhibited by heparin-binding, inhibits factor XII autoactivation and contact-initiated coagulation. O- and N-glycosylated.

Its subcellular location is the secreted. It carries out the reaction Selective cleavage of Arg-|-Ile bonds in factor VII to form factor VIIa and factor XI to form factor XIa.. With respect to regulation, activity is promoted in the presence of negatively charged surfaces. Its function is as follows. Factor XII is a serum glycoprotein that participates in the initiation of blood coagulation, fibrinolysis, and the generation of bradykinin and angiotensin. Prekallikrein is cleaved by factor XII to form kallikrein, which then cleaves factor XII first to alpha-factor XIIa and then to beta-factor XIIa. Alpha-factor XIIa activates factor XI to factor XIa. The chain is Coagulation factor XII (F12) from Bos taurus (Bovine).